The primary structure comprises 434 residues: Septin-6 (434 aa).

At A2 the chain carries N-acetylalanine. S27 carries the post-translational modification Phosphoserine. The Septin-type G domain occupies 39–305 (QGFCFNILCV…ELYRRCKLEE (267 aa)). Residues 49 to 56 (GETGLGKS) are G1 motif. GTP-binding positions include 49–56 (GETGLGKS), G104, 185–193 (KSDAISKSE), G239, and R254. The segment at 101–104 (STVG) is G3 motif. The G4 motif stretch occupies residues 184 to 187 (AKSD). Residues 321 to 407 (QETYEAKRNE…QRKAAAELLQ (87 aa)) are a coiled coil. N6-acetyllysine is present on K367. Residues 403 to 434 (AELLQSQGSQAGGSQTLKRDKEKKNNPWLCIE) form a disordered region. Positions 407-417 (QSQGSQAGGSQ) are enriched in low complexity. S416 is modified (phosphoserine). Residue T418 is modified to Phosphothreonine.

This sequence belongs to the TRAFAC class TrmE-Era-EngA-EngB-Septin-like GTPase superfamily. Septin GTPase family. In terms of assembly, septins polymerize into heterooligomeric protein complexes that form filaments, and associate with cellular membranes, actin filaments and microtubules. GTPase activity is required for filament formation. Filaments are assembled from asymmetrical heterotrimers, composed of SEPTIN2, SEPTIN6 and SEPTIN7 that associate head-to-head to form a hexameric unit. Within the trimer, directly interacts with SEPTIN2 and SEPTIN7. Also interacts with SEPTIN9 and SEPTIN12. Interaction with SEPTIN12 alters filament structure. Component of a septin core octameric complex consisting of SEPTIN12, SEPTIN7, SEPTIN6 and SEPTIN2 or SEPTIN4 in the order 12-7-6-2-2-6-7-12 or 12-7-6-4-4-6-7-12 and located in the sperm annulus. Interacts with SOCS7. Interacts with HNRNPA1. Expressed in the cerebral cortex (at protein level). Associated with synaptic vesicles in various brain regions, including glomeruli of the olfactory bulb (at protein level).

The protein resides in the cytoplasm. It localises to the cytoskeleton. It is found in the spindle. Its subcellular location is the chromosome. The protein localises to the centromere. The protein resides in the kinetochore. It localises to the cleavage furrow. It is found in the midbody. Its subcellular location is the cell projection. The protein localises to the cilium. The protein resides in the flagellum. In terms of biological role, filament-forming cytoskeletal GTPase. Required for normal organization of the actin cytoskeleton. Involved in cytokinesis. Forms a filamentous structure with SEPTIN12, SEPTIN6, SEPTIN2 and probably SEPTIN4 at the sperm annulus which is required for the structural integrity and motility of the sperm tail during postmeiotic differentiation. This Mus musculus (Mouse) protein is Septin-6.